Consider the following 251-residue polypeptide: MDFPSIKIKDFEGPFDLLLHLIKKNQMDIYNVEISKITNQYLKYIDEMKFMDLEITSEFIVVAATLIEIKSKHLLPKIKKDEEEDEEDQEKNLIEKLILYKKIKKAAEFFKDRYVNSGELYTKKPEIIEEINLTNNNEDIFKNLTLLELYNMYNNLLEIYNNKQNKANVIQKRIYVDKYKIEDKLKYLLGLIENNEVSKFSEIIDKCECKLECIVSFLALLEMVKLKKVRVYQSDSFDNILIERRQDDREE.

This sequence belongs to the ScpA family. In terms of assembly, component of a cohesin-like complex composed of ScpA, ScpB and the Smc homodimer, in which ScpA and ScpB bind to the head domain of Smc. The presence of the three proteins is required for the association of the complex with DNA.

It localises to the cytoplasm. Participates in chromosomal partition during cell division. May act via the formation of a condensin-like complex containing Smc and ScpB that pull DNA away from mid-cell into both cell halves. In Clostridium botulinum (strain Alaska E43 / Type E3), this protein is Segregation and condensation protein A.